The following is a 428-amino-acid chain: MAMWLKNGMSFNENGQLVRTHIKIEHGNIAAIHHEQLFEANGEDVIDVGGKLIAPGLIDVHVHLREPGGEAKETIETGTLAAAKGGFTTVAAMPNTNPVPDRKEQMEWLARRIQETAHVRVLPYASITLGQKGEELTDFAALKEAGAFAFTDDGVGVQSAGMMFEAMKRAAALDMAIVAHCEDDTLKNGGAVHDGDFARRYGIAGIPSVCEAVHIARDVLLAEATGCHYHVCHISTKESVRVVRDAKRAGICVTAEVTPHHLLLCDEDIPRLDANYKMNPPLRSRADREALIEGLLDGTIDFIATDHAPHTAAEKAKGMEAAPFGIVGLETAFPLLYTHFVKKNVFTLKQLVDWLTIKPAQCFGLQTGRLEVGAPADITVIDLETEEPIDPETFASKGNNTPFAGWRCQGWPVMTFVGGTLVWEKGRA.

Zn(2+) is bound by residues histidine 61 and histidine 63. Residues 63–65 (HLR) and asparagine 95 contribute to the substrate site. Zn(2+) contacts are provided by aspartate 153, histidine 180, and histidine 233. Substrate is bound at residue asparagine 279. Aspartate 306 contributes to the Zn(2+) binding site. The active site involves aspartate 306. Substrate is bound by residues histidine 310 and 324 to 325 (FG).

This sequence belongs to the metallo-dependent hydrolases superfamily. DHOase family. Class I DHOase subfamily. Zn(2+) is required as a cofactor.

The enzyme catalyses (S)-dihydroorotate + H2O = N-carbamoyl-L-aspartate + H(+). It participates in pyrimidine metabolism; UMP biosynthesis via de novo pathway; (S)-dihydroorotate from bicarbonate: step 3/3. In terms of biological role, catalyzes the reversible cyclization of carbamoyl aspartate to dihydroorotate. In Geobacillus thermodenitrificans (strain NG80-2), this protein is Dihydroorotase.